Reading from the N-terminus, the 208-residue chain is Uracil phosphoribosyltransferase (208 aa).

5-phospho-alpha-D-ribose 1-diphosphate contacts are provided by residues Arg78, Arg103, and 130-138 (DPMFATGGT). Residues Ile193 and 198 to 200 (GDA) each bind uracil. A 5-phospho-alpha-D-ribose 1-diphosphate-binding site is contributed by Asp199.

The protein belongs to the UPRTase family. Requires Mg(2+) as cofactor.

The catalysed reaction is UMP + diphosphate = 5-phospho-alpha-D-ribose 1-diphosphate + uracil. Its pathway is pyrimidine metabolism; UMP biosynthesis via salvage pathway; UMP from uracil: step 1/1. Allosterically activated by GTP. Its function is as follows. Catalyzes the conversion of uracil and 5-phospho-alpha-D-ribose 1-diphosphate (PRPP) to UMP and diphosphate. The chain is Uracil phosphoribosyltransferase from Campylobacter curvus (strain 525.92).